The primary structure comprises 520 residues: Gamma aminobutyrate transaminase 3, chloroplastic (520 aa).

The transit peptide at 1–44 (MAKITSLIGSGIVAATNQVGPHVKHIPAVGNLQKQIVSDQIQVR) directs the protein to the chloroplast. 172-173 (GS) provides a ligand contact to pyridoxal 5'-phosphate. Y205 is a substrate binding site. D312 lines the pyridoxal 5'-phosphate pocket. K341 lines the substrate pocket. K341 is subject to N6-(pyridoxal phosphate)lysine.

It belongs to the class-III pyridoxal-phosphate-dependent aminotransferase family. In terms of tissue distribution, expressed in leaves, roots, stems, flowers and fruits.

The protein resides in the plastid. It localises to the chloroplast. The enzyme catalyses 4-aminobutanoate + pyruvate = succinate semialdehyde + L-alanine. It catalyses the reaction 4-aminobutanoate + glyoxylate = succinate semialdehyde + glycine. Functionally, transaminase that degrades gamma-amino butyric acid (GABA) and uses pyruvate or glyoxylate as amino-group acceptor. Cannot use beta-alanine, ornithine, acetylornithine, serine, glycine, asparagine, glutamine, glutamate, valine, leucine, isoleucine, methionine, phenylalanine, histidine, lysine, arginine, aspartate, threonine, tyrosine, tryptophan, proline, or cysteine as amino donors. The sequence is that of Gamma aminobutyrate transaminase 3, chloroplastic (GABA-TP3) from Solanum lycopersicum (Tomato).